We begin with the raw amino-acid sequence, 932 residues long: Glycine dehydrogenase (decarboxylating) (932 aa).

At Lys685 the chain carries N6-(pyridoxal phosphate)lysine.

It belongs to the GcvP family. As to quaternary structure, the glycine cleavage system is composed of four proteins: P, T, L and H. Pyridoxal 5'-phosphate serves as cofactor.

It carries out the reaction N(6)-[(R)-lipoyl]-L-lysyl-[glycine-cleavage complex H protein] + glycine + H(+) = N(6)-[(R)-S(8)-aminomethyldihydrolipoyl]-L-lysyl-[glycine-cleavage complex H protein] + CO2. Functionally, the glycine cleavage system catalyzes the degradation of glycine. The P protein binds the alpha-amino group of glycine through its pyridoxal phosphate cofactor; CO(2) is released and the remaining methylamine moiety is then transferred to the lipoamide cofactor of the H protein. This is Glycine dehydrogenase (decarboxylating) from Brucella melitensis biotype 2 (strain ATCC 23457).